A 302-amino-acid polypeptide reads, in one-letter code: ATP synthase gamma chain (302 aa).

This sequence belongs to the ATPase gamma chain family. F-type ATPases have 2 components, CF(1) - the catalytic core - and CF(0) - the membrane proton channel. CF(1) has five subunits: alpha(3), beta(3), gamma(1), delta(1), epsilon(1). CF(0) has three main subunits: a, b and c.

It localises to the cell membrane. In terms of biological role, produces ATP from ADP in the presence of a proton gradient across the membrane. The gamma chain is believed to be important in regulating ATPase activity and the flow of protons through the CF(0) complex. The polypeptide is ATP synthase gamma chain (Kineococcus radiotolerans (strain ATCC BAA-149 / DSM 14245 / SRS30216)).